The sequence spans 977 residues: Mast/stem cell growth factor receptor Kit (977 aa).

The signal sequence occupies residues 1–25 (MRGARGAWDFLFVLLLLLLVQTGSS). The Extracellular portion of the chain corresponds to 26-525 (QPSVSPGELS…QIHAHTLFTP (500 aa)). Ig-like C2-type domains are found at residues 27-112 (PSVS…VFVR), 121-205 (DLPL…LKVR), 212-309 (PVVS…LEVV), 318-411 (PMMN…VYVN), and 414-508 (PEIL…FNFA). A disulfide bridge connects residues Cys58 and Cys97. Residues Asn94, Asn130, and Asn145 are each glycosylated (N-linked (GlcNAc...) asparagine). 3 cysteine pairs are disulfide-bonded: Cys136–Cys186, Cys151–Cys183, and Cys233–Cys291. N-linked (GlcNAc...) asparagine glycosylation is found at Asn284, Asn294, Asn301, Asn321, Asn353, Asn368, Asn401, Asn464, and Asn487. The cysteines at positions 429 and 492 are disulfide-linked. Residues 526 to 546 (LLIGFVIAAGLMCIFVMILTY) traverse the membrane as a helical segment. Residues 547–977 (KYLQKPMYEV…TQPLLVHEDV (431 aa)) are Cytoplasmic-facing. Residues Tyr548 and Tyr554 each carry the phosphotyrosine modification. Residue Tyr569 participates in Mg(2+) binding. Residues Tyr569 and Tyr571 each carry the phosphotyrosine; by autocatalysis modification. Residues 569 to 571 (YVY) are important for interaction with phosphotyrosine-binding proteins. One can recognise a Protein kinase domain in the interval 590–938 (LSFGKTLGAG…ISESTNHIYS (349 aa)). ATP-binding positions include 597–604 (GAGAFGKV), Lys624, and 672–678 (EYCCYGD). Tyr704 and Tyr722 each carry phosphotyrosine; by autocatalysis. Residue Tyr731 is modified to Phosphotyrosine. A phosphoserine; by PKC/PRKCA mark is found at Ser742 and Ser747. Asp793 functions as the Proton acceptor in the catalytic mechanism. Arg797 is an ATP binding site. Mg(2+) is bound by residues Asn798 and Asp811. The residue at position 822 (Ser822) is a Phosphoserine. Tyr824 is subject to Phosphotyrosine; by autocatalysis. The residue at position 892 (Ser892) is a Phosphoserine. Tyr901 carries the phosphotyrosine modification. A Phosphotyrosine; by autocatalysis modification is found at Tyr937. Ser960 carries the phosphoserine modification.

The protein belongs to the protein kinase superfamily. Tyr protein kinase family. CSF-1/PDGF receptor subfamily. In terms of assembly, monomer in the absence of bound KITLG/SCF. Homodimer in the presence of bound KITLG/SCF, forming a heterotetramer with two KITLG/SCF molecules. Interacts (via phosphorylated tyrosine residues) with the adapter proteins GRB2 and GRB7 (via SH2 domain), and SH2B2/APS. Interacts (via C-terminus) with MPDZ (via the tenth PDZ domain). Interacts (via phosphorylated tyrosine residues) with PIK3R1 and PIK3CD. Interacts (via phosphorylated tyrosine) with CRK (isoform Crk-II), FYN, SHC1 and MATK/CHK (via SH2 domain). Interacts with LYN and FES/FPS. Interacts (via phosphorylated tyrosine residues) with the protein phosphatases PTPN6/SHP-1 (via SH2 domain), PTPN11/SHP-2 (via SH2 domain) and PTPRU. Interacts with PLCG1. Interacts with DOK1 and TEC. Interacts with IL1RAP (independent of stimulation with KITLG/SCF). A mast cell-specific KITLG/SCF-induced interleukin-33 signaling complex contains IL1RL1, IL1RAP, KIT and MYD88. Ubiquitinated by SOCS6. KIT is rapidly ubiquitinated after autophosphorylation induced by KITLG/SCF binding, leading to internalization and degradation. Post-translationally, autophosphorylated on tyrosine residues. KITLG/SCF binding promotes autophosphorylation. Phosphorylated tyrosine residues are important for interaction with specific binding partners.

It localises to the cell membrane. The enzyme catalyses L-tyrosyl-[protein] + ATP = O-phospho-L-tyrosyl-[protein] + ADP + H(+). Present in an inactive conformation in the absence of bound ligand. KITLG/SCF binding leads to dimerization and activation by autophosphorylation on tyrosine residues. Activity is down-regulated by PRKCA-mediated phosphorylation on serine residues. Tyrosine-protein kinase that acts as a cell-surface receptor for the cytokine KITLG/SCF and plays an essential role in the regulation of cell survival and proliferation, hematopoiesis, stem cell maintenance, gametogenesis, mast cell development, migration and function, and in melanogenesis. In response to KITLG/SCF binding, KIT can activate several signaling pathways. Phosphorylates PIK3R1, PLCG1, SH2B2/APS and CBL. Activates the AKT1 signaling pathway by phosphorylation of PIK3R1, the regulatory subunit of phosphatidylinositol 3-kinase. Activated KIT also transmits signals via GRB2 and activation of RAS, RAF1 and the MAP kinases MAPK1/ERK2 and/or MAPK3/ERK1. Promotes activation of STAT family members STAT1, STAT3, STAT5A and STAT5B. Activation of PLCG1 leads to the production of the cellular signaling molecules diacylglycerol and inositol 1,4,5-trisphosphate. KIT signaling is modulated by protein phosphatases, and by rapid internalization and degradation of the receptor. Activated KIT promotes phosphorylation of the protein phosphatases PTPN6/SHP-1 and PTPRU, and of the transcription factors STAT1, STAT3, STAT5A and STAT5B. Promotes phosphorylation of PIK3R1, CBL, CRK (isoform Crk-II), LYN, MAPK1/ERK2 and/or MAPK3/ERK1, PLCG1, SRC and SHC1. The chain is Mast/stem cell growth factor receptor Kit (KIT) from Bos taurus (Bovine).